A 153-amino-acid polypeptide reads, in one-letter code: MAKITGNLVATGLKFSIVTARFNDFINDKLLSGAVDTLVRHGAVESDIDTVWVPGAFEIPLVAKKMAESGKYDAVICLGTVIRGSTTHYDYVCNEVAKGIGAVALQTGVPIMFGVLTTESIEQAIERAGTKAGNKGAECALGAIEMVNVLKAL.

Residues phenylalanine 22, 56-58, and 80-82 each bind 5-amino-6-(D-ribitylamino)uracil; these read AFE and TVI. Position 85–86 (85–86) interacts with (2S)-2-hydroxy-3-oxobutyl phosphate; sequence ST. Histidine 88 (proton donor) is an active-site residue. Phenylalanine 113 contributes to the 5-amino-6-(D-ribitylamino)uracil binding site. (2S)-2-hydroxy-3-oxobutyl phosphate is bound at residue arginine 127.

It belongs to the DMRL synthase family. Forms an icosahedral capsid composed of 60 subunits, arranged as a dodecamer of pentamers.

The enzyme catalyses (2S)-2-hydroxy-3-oxobutyl phosphate + 5-amino-6-(D-ribitylamino)uracil = 6,7-dimethyl-8-(1-D-ribityl)lumazine + phosphate + 2 H2O + H(+). Its pathway is cofactor biosynthesis; riboflavin biosynthesis; riboflavin from 2-hydroxy-3-oxobutyl phosphate and 5-amino-6-(D-ribitylamino)uracil: step 1/2. Functionally, catalyzes the formation of 6,7-dimethyl-8-ribityllumazine by condensation of 5-amino-6-(D-ribitylamino)uracil with 3,4-dihydroxy-2-butanone 4-phosphate. This is the penultimate step in the biosynthesis of riboflavin. In Haemophilus ducreyi (strain 35000HP / ATCC 700724), this protein is 6,7-dimethyl-8-ribityllumazine synthase.